Here is a 145-residue protein sequence, read N- to C-terminus: Bacilliredoxin SERP1075 (145 aa).

This sequence belongs to the bacilliredoxin family.

The protein is Bacilliredoxin SERP1075 of Staphylococcus epidermidis (strain ATCC 35984 / DSM 28319 / BCRC 17069 / CCUG 31568 / BM 3577 / RP62A).